Reading from the N-terminus, the 136-residue chain is Large ribosomal subunit protein uL13 (136 aa).

Belongs to the universal ribosomal protein uL13 family. Part of the 50S ribosomal subunit.

In terms of biological role, this protein is one of the early assembly proteins of the 50S ribosomal subunit, although it is not seen to bind rRNA by itself. It is important during the early stages of 50S assembly. The protein is Large ribosomal subunit protein uL13 of Thermoplasma volcanium (strain ATCC 51530 / DSM 4299 / JCM 9571 / NBRC 15438 / GSS1).